The chain runs to 130 residues: Small ribosomal subunit protein uS8 (130 aa).

It belongs to the universal ribosomal protein uS8 family. In terms of assembly, part of the 30S ribosomal subunit. Contacts proteins S5 and S12.

Functionally, one of the primary rRNA binding proteins, it binds directly to 16S rRNA central domain where it helps coordinate assembly of the platform of the 30S subunit. This chain is Small ribosomal subunit protein uS8, found in Aeromonas salmonicida (strain A449).